The sequence spans 240 residues: U1 small nuclear ribonucleoprotein C (240 aa).

Residues 4–36 (YYCEYCDIYLTHSSPVGRRQHIQGRKHISAKIE) form a Matrin-type zinc finger. Disordered stretches follow at residues 86 to 122 (GMKH…SKYH) and 175 to 240 (IDSD…SVDA). 2 stretches are compositionally biased toward basic and acidic residues: residues 178 to 194 (DPVK…DNAI) and 203 to 219 (DQGD…HADH). The segment covering 226 to 240 (TDGTANGNDQVSVDA) has biased composition (polar residues).

This sequence belongs to the U1 small nuclear ribonucleoprotein C family. In terms of assembly, U1 snRNP is composed of the 7 core Sm proteins B/B', D1, D2, D3, E, F and G that assemble in a heptameric protein ring on the Sm site of the small nuclear RNA to form the core snRNP, and at least 3 U1 snRNP-specific proteins U1-70K, U1-A and U1-C. U1-C interacts with U1 snRNA and the 5' splice-site region of the pre-mRNA.

It localises to the nucleus. In terms of biological role, component of the spliceosomal U1 snRNP, which is essential for recognition of the pre-mRNA 5' splice-site and the subsequent assembly of the spliceosome. U1-C is directly involved in initial 5' splice-site recognition for both constitutive and regulated alternative splicing. The interaction with the 5' splice-site seems to precede base-pairing between the pre-mRNA and the U1 snRNA. Stimulates commitment or early (E) complex formation by stabilizing the base pairing of the 5' end of the U1 snRNA and the 5' splice-site region. This chain is U1 small nuclear ribonucleoprotein C, found in Plasmodium vivax (strain Salvador I).